Reading from the N-terminus, the 141-residue chain is Nucleoside diphosphate kinase (141 aa).

ATP is bound by residues lysine 9, phenylalanine 57, arginine 85, threonine 91, arginine 102, and asparagine 112. Catalysis depends on histidine 115, which acts as the Pros-phosphohistidine intermediate.

Belongs to the NDK family. In terms of assembly, homotetramer. Requires Mg(2+) as cofactor.

The protein resides in the cytoplasm. The enzyme catalyses a 2'-deoxyribonucleoside 5'-diphosphate + ATP = a 2'-deoxyribonucleoside 5'-triphosphate + ADP. It catalyses the reaction a ribonucleoside 5'-diphosphate + ATP = a ribonucleoside 5'-triphosphate + ADP. Major role in the synthesis of nucleoside triphosphates other than ATP. The ATP gamma phosphate is transferred to the NDP beta phosphate via a ping-pong mechanism, using a phosphorylated active-site intermediate. The sequence is that of Nucleoside diphosphate kinase from Chloroherpeton thalassium (strain ATCC 35110 / GB-78).